A 260-amino-acid polypeptide reads, in one-letter code: Homeobox protein Hox-D11b (260 aa).

Over residues 1–14 the composition is skewed to low complexity; it reads MFSSSFSYPSKTSP. 2 disordered regions span residues 1 to 21 and 151 to 206; these read MFSS…PFLA and ITPG…CTRR. The segment covering 167 to 179 has biased composition (basic and acidic residues); sequence RSPDGESSEERAG. Positions 205-260 form a DNA-binding region, homeobox; truncated; it reads RRKKRCPYSKQQIIELEREFLFNIYINKDRRMQLSHLLRLTDRCVNNPLNQDSFFT.

This sequence belongs to the Abd-B homeobox family.

The protein localises to the nucleus. In terms of biological role, sequence-specific transcription factor which is part of a developmental regulatory system that provides cells with specific positional identities on the anterior-posterior axis. The sequence is that of Homeobox protein Hox-D11b (hoxd11b) from Takifugu rubripes (Japanese pufferfish).